Here is a 66-residue protein sequence, read N- to C-terminus: Large ribosomal subunit protein uL29 (66 aa).

Belongs to the universal ribosomal protein uL29 family.

The polypeptide is Large ribosomal subunit protein uL29 (Borrelia hermsii (strain HS1 / DAH)).